We begin with the raw amino-acid sequence, 571 residues long: Cationic amino acid transporter 8 (571 aa).

Asn35 carries an N-linked (GlcNAc...) asparagine glycan. Helical transmembrane passes span 39–59 (FWLL…YFDW), 94–114 (SLYP…GFLY), 117–137 (IGPK…WVFL), 148–168 (FLSF…ILTI), 177–197 (TFIL…PATL), and 217–237 (IFLI…LMPF). N-linked (GlcNAc...) asparagine glycans are attached at residues Asn298, Asn325, and Asn346. The chain crosses the membrane as a helical span at residues 365 to 385 (LFFKVLLSYPSICIIVYFILF). N-linked (GlcNAc...) asparagine glycosylation is present at Asn386. 5 helical membrane-spanning segments follow: residues 405–425 (SIIN…IIFG), 433–453 (SAII…TALI), 461–481 (VSAF…YCFI), 488–508 (VVFG…SLLC), and 528–548 (VVLL…VLYF).

It belongs to the SLC43A transporter (TC 2.A.1.44) family.

Its subcellular location is the membrane. The catalysed reaction is L-arginine(in) = L-arginine(out). Its function is as follows. Sodium-independent cationic amino acid transporter. Transports L-arginine, L-lysine, L-histidine and L-ornithine. The chain is Cationic amino acid transporter 8 from Plasmodium vivax (strain Salvador I).